Here is a 191-residue protein sequence, read N- to C-terminus: Ureidoglycolate lyase (191 aa).

It belongs to the ureidoglycolate lyase family. Homodimer.

The catalysed reaction is (S)-ureidoglycolate = urea + glyoxylate. Its pathway is nitrogen metabolism; (S)-allantoin degradation. Catalyzes the catabolism of the allantoin degradation intermediate (S)-ureidoglycolate, generating urea and glyoxylate. Involved in the utilization of allantoin as secondary nitrogen source when primary sources are limiting. This is Ureidoglycolate lyase from Schizosaccharomyces pombe (strain 972 / ATCC 24843) (Fission yeast).